Consider the following 651-residue polypeptide: Chaperone protein dnaK1 (651 aa).

Thr-197 is subject to Phosphothreonine; by autocatalysis.

Belongs to the heat shock protein 70 family.

Acts as a chaperone. This is Chaperone protein dnaK1 (dnaK1) from Thermosynechococcus vestitus (strain NIES-2133 / IAM M-273 / BP-1).